The primary structure comprises 167 residues: UPF0114 protein in repA1-repA2 intergenic region (167 aa).

Transmembrane regions (helical) follow at residues 15-35 (LMFP…LKFF), 53-73 (LVLA…LVMV), and 136-156 (IMLC…MAYI).

Belongs to the UPF0114 family.

It is found in the cell membrane. This chain is UPF0114 protein in repA1-repA2 intergenic region, found in Buchnera aphidicola subsp. Schizaphis graminum (strain Sg).